Consider the following 733-residue polypeptide: uncharacterized protein (733 aa).

A helical membrane pass occupies residues 174-194 (WAVMILASLRPELFGPIIIAG).

The protein localises to the membrane. This is an uncharacterized protein from Rhizobium meliloti (Ensifer meliloti).